Reading from the N-terminus, the 473-residue chain is Hyaluronidase-2 (473 aa).

Positions 1 to 20 are cleaved as a signal peptide; that stretch reads MRAGLGPIITLALVLEVAWA. Cystine bridges form between C47-C340 and C211-C227. N-linked (GlcNAc...) asparagine glycosylation is found at N74 and N103. E135 functions as the Proton donor in the catalytic mechanism. The N-linked (GlcNAc...) asparagine glycan is linked to N357. The EGF-like domain maps to 361-439; it reads ATQYCSWTQC…YLGWGGEQCQ (79 aa). 3 disulfide bridges follow: C365/C376, C370/C427, and C429/C438. N390 carries N-linked (GlcNAc...) asparagine glycosylation. N448 is lipidated: GPI-anchor amidated asparagine; alternate. The N-linked (GlcNAc...) asparagine; alternate glycan is linked to N448. Positions 449 to 473 are cleaved as a propeptide — removed in mature form; the sequence is ASRAWAGSHLTSLLGLVAVALTWTL.

The protein belongs to the glycosyl hydrolase 56 family. Interacts with MST1R. Widely expressed, with highest expression levels in kidney, lung and liver (at protein level).

The protein resides in the cell membrane. The enzyme catalyses Random hydrolysis of (1-&gt;4)-linkages between N-acetyl-beta-D-glucosamine and D-glucuronate residues in hyaluronate.. Its function is as follows. Catalyzes hyaluronan degradation into small fragments that are endocytosed and degraded in lysosomes by HYAL1 and exoglycosidases. Essential for the breakdown of extracellular matrix hyaluronan. This chain is Hyaluronidase-2 (Hyal2), found in Mus musculus (Mouse).